Consider the following 179-residue polypeptide: Stathmin-2 (179 aa).

The tract at residues 1 to 26 (MAKTAMAYKEKMKELSMLSLICSCFY) is membrane attachment. Ser16 bears the Phosphoserine mark. Residues Cys22 and Cys24 are each lipidated (S-palmitoyl cysteine). Residues 38 to 179 (DDMEVKQINK…NKELQVELSG (142 aa)) enclose the SLD domain. The tract at residues 39-96 (DMEVKQINKRASGQAFELILKPPSPISEAPRTLASPKKKDLSLEEIQKKLEAAEERRK) is regulatory/phosphorylation domain. 4 positions are modified to phosphoserine: Ser50, Ser62, Ser73, and Ser97. Residues 75–179 (KKKDLSLEEI…NKELQVELSG (105 aa)) adopt a coiled-coil conformation.

This sequence belongs to the stathmin family. As to quaternary structure, interacts with MAPK8. Interacts with ITM2C. Interacts with KIFBP. Interacts (via the N-terminal region) with CIB1 (via C-terminal region); the interaction is direct, occurs in a calcium-dependent manner and attenuates the neurite outgrowth inhibition of STMN2. Sumoylated. Post-translationally, phosphorylated mostly by MAPK8, but also by MAPK9 and MAPK10 in the developing brain cortex. In terms of processing, N-terminal palmitoylation promotes specific anchoring to the cytosolic leaflet of Golgi membranes and subsequent vesicular trafficking along dendrites and axons. Neuronal Stathmins are substrates for palmitoyltransferases ZDHHC3, ZDHHC7 and ZDHHC15. Neuron specific.

It localises to the cytoplasm. The protein localises to the perinuclear region. It is found in the cell projection. Its subcellular location is the growth cone. The protein resides in the membrane. It localises to the axon. The protein localises to the golgi apparatus. It is found in the endosome. Its subcellular location is the lamellipodium. Functionally, regulator of microtubule stability. When phosphorylated by MAPK8, stabilizes microtubules and consequently controls neurite length in cortical neurons. In the developing brain, negatively regulates the rate of exit from multipolar stage and retards radial migration from the ventricular zone. This is Stathmin-2 (STMN2) from Homo sapiens (Human).